Consider the following 204-residue polypeptide: MSNPIKIGIGGPVGAGKTQLIEKVVKRLAKKMSIGVITNDIYTKEDEKILVNTGVLPEDRIIGVETGGCPHTAIREDASMNFAAIDELLERNDDIELIFIESGGDNLAATFSPELVDFSIYIIDVAQGEKIPRKGGQGMIKSDFFIINKTDLAPYVGASLDQMAKDTEVFRGNHPFAFTNLKTDEGLEKVIEWIEHDVLLKGLT.

11-18 contributes to the GTP binding site; the sequence is GPVGAGKT.

The protein belongs to the SIMIBI class G3E GTPase family. UreG subfamily. In terms of assembly, homodimer. UreD, UreF and UreG form a complex that acts as a GTP-hydrolysis-dependent molecular chaperone, activating the urease apoprotein by helping to assemble the nickel containing metallocenter of UreC. The UreE protein probably delivers the nickel.

The protein resides in the cytoplasm. In terms of biological role, facilitates the functional incorporation of the urease nickel metallocenter. This process requires GTP hydrolysis, probably effectuated by UreG. This Staphylococcus epidermidis (strain ATCC 35984 / DSM 28319 / BCRC 17069 / CCUG 31568 / BM 3577 / RP62A) protein is Urease accessory protein UreG.